The primary structure comprises 396 residues: Methionine import ATP-binding protein MetN 2 (396 aa).

The ABC transporter domain maps to 41-280; it reads VSFELVGKVF…PRHGATRALL (240 aa). ATP is bound at residue 77 to 84; it reads GRSGAGKS.

This sequence belongs to the ABC transporter superfamily. Methionine importer (TC 3.A.1.24) family. In terms of assembly, the complex is composed of two ATP-binding proteins (MetN), two transmembrane proteins (MetI) and a solute-binding protein (MetQ).

It is found in the cell inner membrane. It catalyses the reaction L-methionine(out) + ATP + H2O = L-methionine(in) + ADP + phosphate + H(+). The enzyme catalyses D-methionine(out) + ATP + H2O = D-methionine(in) + ADP + phosphate + H(+). Part of the ABC transporter complex MetNIQ involved in methionine import. Responsible for energy coupling to the transport system. This Burkholderia pseudomallei (strain 1710b) protein is Methionine import ATP-binding protein MetN 2.